A 132-amino-acid polypeptide reads, in one-letter code: Small ribosomal subunit protein uS8 (132 aa).

This sequence belongs to the universal ribosomal protein uS8 family. In terms of assembly, part of the 30S ribosomal subunit. Contacts proteins S5 and S12.

In terms of biological role, one of the primary rRNA binding proteins, it binds directly to 16S rRNA central domain where it helps coordinate assembly of the platform of the 30S subunit. This is Small ribosomal subunit protein uS8 from Leuconostoc mesenteroides subsp. mesenteroides (strain ATCC 8293 / DSM 20343 / BCRC 11652 / CCM 1803 / JCM 6124 / NCDO 523 / NBRC 100496 / NCIMB 8023 / NCTC 12954 / NRRL B-1118 / 37Y).